Consider the following 205-residue polypeptide: uncharacterized protein (205 aa).

A helical transmembrane segment spans residues 5–27 (IIVLFIIHFIMINENVFIALLHY).

The protein to T.maritima TM1570.

It localises to the membrane. This is an uncharacterized protein from Aquifex aeolicus (strain VF5).